A 90-amino-acid polypeptide reads, in one-letter code: Guanine nucleotide-binding protein subunit gamma (90 aa).

The S-palmitoyl cysteine moiety is linked to residue cysteine 86. Cysteine 87 carries the post-translational modification Cysteine methyl ester. Cysteine 87 carries S-farnesyl cysteine lipidation. Positions 88-90 (CIM) are cleaved as a propeptide — removed in mature form.

This sequence belongs to the G protein gamma family. In terms of assembly, g proteins are composed of 3 units, alpha, beta and gamma.

The protein localises to the membrane. This is Guanine nucleotide-binding protein subunit gamma from Eremothecium gossypii (strain ATCC 10895 / CBS 109.51 / FGSC 9923 / NRRL Y-1056) (Yeast).